The chain runs to 216 residues: Probable flavin-dependent thymidylate synthase (216 aa).

Residues 1–216 (MSAKLISVTK…PSIAKALDWV (216 aa)) enclose the ThyX domain. Residues Ser55, 78 to 80 (RHR), and Glu86 each bind FAD. Residues 75 to 78 (QVLR), 86 to 90 (EFSQR), and Arg155 contribute to the dUMP site. A ThyX motif motif is present at residues 78-88 (RHRSFHFQEFS). Residue His177 participates in FAD binding. Position 182 (Arg182) interacts with dUMP. Arg182 acts as the Involved in ionization of N3 of dUMP, leading to its activation in catalysis.

Belongs to the thymidylate synthase ThyX family. As to quaternary structure, homotetramer. Requires FAD as cofactor.

The catalysed reaction is dUMP + (6R)-5,10-methylene-5,6,7,8-tetrahydrofolate + NADPH + H(+) = dTMP + (6S)-5,6,7,8-tetrahydrofolate + NADP(+). Its pathway is pyrimidine metabolism; dTTP biosynthesis. Catalyzes the reductive methylation of 2'-deoxyuridine-5'-monophosphate (dUMP) to 2'-deoxythymidine-5'-monophosphate (dTMP) while utilizing 5,10-methylenetetrahydrofolate (mTHF) as the methyl donor, and NADPH and FADH(2) as the reductant. This is Probable flavin-dependent thymidylate synthase from Paramecium bursaria Chlorella virus 1 (PBCV-1).